Reading from the N-terminus, the 287-residue chain is Protein-export membrane protein SecF (287 aa).

6 helical membrane-spanning segments follow: residues 21–41, 129–149, 158–178, 182–202, 226–246, and 259–279; these read LIAIPAAITVIALLLVVFNGL, QIYWAIGFAFLFMSVTVFIIF, VILAAASDIIIAVGGMSLFGI, LASVGAILMLIGYSVDTDILL, VTMSIAAIASMAALYLVTVFV, and VLIIGLLADILTTWLMNLGIL.

The protein belongs to the SecD/SecF family. SecF subfamily. In terms of assembly, part of the protein translocation apparatus. Forms a complex with SecD.

It localises to the cell membrane. Its function is as follows. Involved in protein export. This Methanothermobacter thermautotrophicus (strain ATCC 29096 / DSM 1053 / JCM 10044 / NBRC 100330 / Delta H) (Methanobacterium thermoautotrophicum) protein is Protein-export membrane protein SecF.